A 444-amino-acid polypeptide reads, in one-letter code: Phosphoglucosamine mutase (444 aa).

Ser102 serves as the catalytic Phosphoserine intermediate. Residues Ser102, Asp241, Asp243, and Asp245 each contribute to the Mg(2+) site. Residue Ser102 is modified to Phosphoserine.

Belongs to the phosphohexose mutase family. Requires Mg(2+) as cofactor. Post-translationally, activated by phosphorylation.

The catalysed reaction is alpha-D-glucosamine 1-phosphate = D-glucosamine 6-phosphate. Functionally, catalyzes the conversion of glucosamine-6-phosphate to glucosamine-1-phosphate. The sequence is that of Phosphoglucosamine mutase from Actinobacillus succinogenes (strain ATCC 55618 / DSM 22257 / CCUG 43843 / 130Z).